A 281-amino-acid polypeptide reads, in one-letter code: Large ribosomal subunit protein mL46 (281 aa).

The N-terminal 19 residues, 1–19, are a transit peptide targeting the mitochondrion; sequence MKVNLMLKRGLATATATAS. Basic and acidic residues predominate over residues 106–118; sequence RERSTKQEVKLSD. The tract at residues 106-141 is disordered; that stretch reads RERSTKQEVKLSDDSTVAFSNNQKEQSKDDVNRPVI. Positions 119 to 129 are enriched in polar residues; it reads DSTVAFSNNQK.

The protein belongs to the mitochondrion-specific ribosomal protein mL46 family. In terms of assembly, component of the mitochondrial large ribosomal subunit (mt-LSU). Mature yeast 74S mitochondrial ribosomes consist of a small (37S) and a large (54S) subunit. The 37S small subunit contains a 15S ribosomal RNA (15S mt-rRNA) and 34 different proteins. The 54S large subunit contains a 21S rRNA (21S mt-rRNA) and 46 different proteins.

It is found in the mitochondrion. In terms of biological role, component of the mitochondrial ribosome (mitoribosome), a dedicated translation machinery responsible for the synthesis of mitochondrial genome-encoded proteins, including at least some of the essential transmembrane subunits of the mitochondrial respiratory chain. The mitoribosomes are attached to the mitochondrial inner membrane and translation products are cotranslationally integrated into the membrane. This chain is Large ribosomal subunit protein mL46 (MRPL17), found in Saccharomyces cerevisiae (strain ATCC 204508 / S288c) (Baker's yeast).